The primary structure comprises 147 residues: Hemoglobin subunit gamma (147 aa).

A Globin domain is found at 3 to 147; it reads HFTAEEKAVI…VAIALAHKYH (145 aa). Heme b-binding residues include histidine 64 and histidine 93.

It belongs to the globin family. As to quaternary structure, heterotetramer of two alpha chains and two gamma chains in fetal hemoglobin (Hb F). In terms of tissue distribution, red blood cells.

Functionally, gamma chains make up the fetal hemoglobin F, in combination with alpha chains. The sequence is that of Hemoglobin subunit gamma (HBG) from Eulemur fulvus fulvus (Brown lemur).